Consider the following 403-residue polypeptide: S-adenosylmethionine synthase (403 aa).

H22 serves as a coordination point for ATP. Position 24 (D24) interacts with Mg(2+). E50 lines the K(+) pocket. E63 and Q107 together coordinate L-methionine. The tract at residues 107–117 is flexible loop; that stretch reads QSPDIAMGVDK. Residues 182–184, 248–249, D257, 263–264, A280, and K284 each bind ATP; these read DAK, RF, and RK. D257 is an L-methionine binding site. K288 is a binding site for L-methionine.

It belongs to the AdoMet synthase family. In terms of assembly, homotetramer; dimer of dimers. Requires Mg(2+) as cofactor. K(+) serves as cofactor.

It is found in the cytoplasm. The enzyme catalyses L-methionine + ATP + H2O = S-adenosyl-L-methionine + phosphate + diphosphate. Its pathway is amino-acid biosynthesis; S-adenosyl-L-methionine biosynthesis; S-adenosyl-L-methionine from L-methionine: step 1/1. In terms of biological role, catalyzes the formation of S-adenosylmethionine (AdoMet) from methionine and ATP. The overall synthetic reaction is composed of two sequential steps, AdoMet formation and the subsequent tripolyphosphate hydrolysis which occurs prior to release of AdoMet from the enzyme. This chain is S-adenosylmethionine synthase, found in Chloroflexus aurantiacus (strain ATCC 29366 / DSM 635 / J-10-fl).